The sequence spans 891 residues: Alanine--tRNA ligase (891 aa).

Zn(2+) contacts are provided by His574, His578, Cys676, and His680.

Belongs to the class-II aminoacyl-tRNA synthetase family. Zn(2+) is required as a cofactor.

It localises to the cytoplasm. The catalysed reaction is tRNA(Ala) + L-alanine + ATP = L-alanyl-tRNA(Ala) + AMP + diphosphate. Its function is as follows. Catalyzes the attachment of alanine to tRNA(Ala) in a two-step reaction: alanine is first activated by ATP to form Ala-AMP and then transferred to the acceptor end of tRNA(Ala). Also edits incorrectly charged Ser-tRNA(Ala) and Gly-tRNA(Ala) via its editing domain. In Synechococcus sp. (strain WH7803), this protein is Alanine--tRNA ligase.